The sequence spans 465 residues: 23S rRNA (uracil(1939)-C(5))-methyltransferase RlmD (465 aa).

A disordered region spans residues 1–22; sequence MSEAVPTSARKSKNAPVAPGPA. A TRAM domain is found at 16 to 80; that stretch reads PVAPGPAPVL…PSYEQATVVD (65 aa). C93, C99, C102, and C181 together coordinate [4Fe-4S] cluster. 6 residues coordinate S-adenosyl-L-methionine: Q289, F318, N323, E339, N367, and D388. C421 serves as the catalytic Nucleophile.

It belongs to the class I-like SAM-binding methyltransferase superfamily. RNA M5U methyltransferase family. RlmD subfamily.

It catalyses the reaction uridine(1939) in 23S rRNA + S-adenosyl-L-methionine = 5-methyluridine(1939) in 23S rRNA + S-adenosyl-L-homocysteine + H(+). In terms of biological role, catalyzes the formation of 5-methyl-uridine at position 1939 (m5U1939) in 23S rRNA. The polypeptide is 23S rRNA (uracil(1939)-C(5))-methyltransferase RlmD (Burkholderia cenocepacia (strain HI2424)).